A 348-amino-acid chain; its full sequence is MANYTPAPEDDYDVFIEDDLSDDEIEPCTPYDPKILSAQLVPYLYTTVFMVGLLDNILVVFILVKYKGLRQAENMSFLNLALSNLGFLLTLPFWAYAASHGEGFDDPLCKILLLLYSIGLYSEAFFNVLLTVQRYKEFFHVRRRFSACRTVAGSIFISVLVWVTATLVTLPELVSYKPQMQSQKYKCFFTGLHFLPADETFWKHFLTLKMNILGFLLPLFAFVYCYVRMRKTLQFRERNYGLFKLVFTIMAVFLLMWGPYNIVLFLSAFNEHFSLHGCGSSYNLNKSVQITRIIAATHCCVNPLLYVFLDKAFRKHLCHLFYLCSDTAPQPTEEPAQGASGEEYHLSS.

Residues 1–43 lie on the Extracellular side of the membrane; the sequence is MANYTPAPEDDYDVFIEDDLSDDEIEPCTPYDPKILSAQLVPY. Residues 44-64 form a helical membrane-spanning segment; the sequence is LYTTVFMVGLLDNILVVFILV. The Cytoplasmic segment spans residues 65–76; the sequence is KYKGLRQAENMS. Residues 77–97 traverse the membrane as a helical segment; the sequence is FLNLALSNLGFLLTLPFWAYA. At 98–110 the chain is on the extracellular side; sequence ASHGEGFDDPLCK. The cysteines at positions 109 and 187 are disulfide-linked. A helical membrane pass occupies residues 111–131; that stretch reads ILLLLYSIGLYSEAFFNVLLT. Residues 132 to 150 are Cytoplasmic-facing; that stretch reads VQRYKEFFHVRRRFSACRT. The helical transmembrane segment at 151-171 threads the bilayer; it reads VAGSIFISVLVWVTATLVTLP. Residues 172-204 are Extracellular-facing; sequence ELVSYKPQMQSQKYKCFFTGLHFLPADETFWKH. The chain crosses the membrane as a helical span at residues 205–225; it reads FLTLKMNILGFLLPLFAFVYC. At 226-244 the chain is on the cytoplasmic side; the sequence is YVRMRKTLQFRERNYGLFK. A helical membrane pass occupies residues 245–265; sequence LVFTIMAVFLLMWGPYNIVLF. Residues 266-292 lie on the Extracellular side of the membrane; sequence LSAFNEHFSLHGCGSSYNLNKSVQITR. An N-linked (GlcNAc...) asparagine glycan is attached at Asn285. The helical transmembrane segment at 293–313 threads the bilayer; that stretch reads IIAATHCCVNPLLYVFLDKAF. At 314 to 348 the chain is on the cytoplasmic side; that stretch reads RKHLCHLFYLCSDTAPQPTEEPAQGASGEEYHLSS.

This sequence belongs to the G-protein coupled receptor 1 family.

Its subcellular location is the cell membrane. In terms of biological role, receptor for CCL19 and chemerin/RARRES2. Does not appear to be a signaling receptor, but may have a role in modulating chemokine-triggered immune responses by capturing and internalizing CCL19 or by presenting RARRES2 ligand to CMKLR1, a functional signaling receptor. Plays a critical role for the development of Th2 responses. The protein is Chemokine C-C motif receptor-like 2 (CCRL2) of Bos taurus (Bovine).